Consider the following 497-residue polypeptide: Arabinose import ATP-binding protein AraG (497 aa).

ABC transporter domains follow at residues 6–242 and 250–497; these read LRFD…MVGR and FRPR…ALPA. 38–45 lines the ATP pocket; the sequence is GENGAGKS.

The protein belongs to the ABC transporter superfamily. Arabinose importer (TC 3.A.1.2.2) family. As to quaternary structure, the complex is composed of two ATP-binding proteins (AraG), two transmembrane proteins (AraH) and a solute-binding protein (AraF).

It is found in the cell inner membrane. The enzyme catalyses L-arabinose(out) + ATP + H2O = L-arabinose(in) + ADP + phosphate + H(+). Part of the ABC transporter complex AraFGH involved in arabinose import. Responsible for energy coupling to the transport system. This is Arabinose import ATP-binding protein AraG from Chromohalobacter salexigens (strain ATCC BAA-138 / DSM 3043 / CIP 106854 / NCIMB 13768 / 1H11).